The chain runs to 161 residues: Regulator of ribonuclease activity A (161 aa).

It belongs to the RraA family. Homotrimer. Binds to both RNA-binding sites in the C-terminal region of Rne and to RhlB.

The protein localises to the cytoplasm. Its function is as follows. Globally modulates RNA abundance by binding to RNase E (Rne) and regulating its endonucleolytic activity. Can modulate Rne action in a substrate-dependent manner by altering the composition of the degradosome. Modulates RNA-binding and helicase activities of the degradosome. This Sodalis glossinidius (strain morsitans) protein is Regulator of ribonuclease activity A.